The sequence spans 97 residues: Exodeoxyribonuclease 7 small subunit (97 aa).

The tract at residues 64–97 is disordered; that stretch reads NGQLHPAEEKGDDVSNNGVQNQGYKSQFLDGDVF. Over residues 77-88 the composition is skewed to polar residues; that stretch reads VSNNGVQNQGYK.

It belongs to the XseB family. As to quaternary structure, heterooligomer composed of large and small subunits.

The protein localises to the cytoplasm. It catalyses the reaction Exonucleolytic cleavage in either 5'- to 3'- or 3'- to 5'-direction to yield nucleoside 5'-phosphates.. Bidirectionally degrades single-stranded DNA into large acid-insoluble oligonucleotides, which are then degraded further into small acid-soluble oligonucleotides. The polypeptide is Exodeoxyribonuclease 7 small subunit (Limosilactobacillus fermentum (strain NBRC 3956 / LMG 18251) (Lactobacillus fermentum)).